We begin with the raw amino-acid sequence, 382 residues long: Queuine tRNA-ribosyltransferase (382 aa).

Asp93 acts as the Proton acceptor in catalysis. Residues 93 to 97 (DSGGF), Asp147, Gln191, and Gly218 each bind substrate. The segment at 249–255 (GVGKPED) is RNA binding. The Nucleophile role is filled by Asp268. Residues 273–277 (TRNAR) are RNA binding; important for wobble base 34 recognition. The Zn(2+) site is built by Cys306, Cys308, Cys311, and His337.

The protein belongs to the queuine tRNA-ribosyltransferase family. As to quaternary structure, homodimer. Within each dimer, one monomer is responsible for RNA recognition and catalysis, while the other monomer binds to the replacement base PreQ1. Requires Zn(2+) as cofactor.

The catalysed reaction is 7-aminomethyl-7-carbaguanine + guanosine(34) in tRNA = 7-aminomethyl-7-carbaguanosine(34) in tRNA + guanine. It functions in the pathway tRNA modification; tRNA-queuosine biosynthesis. Functionally, catalyzes the base-exchange of a guanine (G) residue with the queuine precursor 7-aminomethyl-7-deazaguanine (PreQ1) at position 34 (anticodon wobble position) in tRNAs with GU(N) anticodons (tRNA-Asp, -Asn, -His and -Tyr). Catalysis occurs through a double-displacement mechanism. The nucleophile active site attacks the C1' of nucleotide 34 to detach the guanine base from the RNA, forming a covalent enzyme-RNA intermediate. The proton acceptor active site deprotonates the incoming PreQ1, allowing a nucleophilic attack on the C1' of the ribose to form the product. After dissociation, two additional enzymatic reactions on the tRNA convert PreQ1 to queuine (Q), resulting in the hypermodified nucleoside queuosine (7-(((4,5-cis-dihydroxy-2-cyclopenten-1-yl)amino)methyl)-7-deazaguanosine). This chain is Queuine tRNA-ribosyltransferase, found in Actinobacillus pleuropneumoniae serotype 5b (strain L20).